We begin with the raw amino-acid sequence, 196 residues long: Probable thymidylate kinase (196 aa).

Position 7–14 (7–14) interacts with ATP; sequence GIDGSGKS.

It belongs to the thymidylate kinase family.

It carries out the reaction dTMP + ATP = dTDP + ADP. In Natronomonas pharaonis (strain ATCC 35678 / DSM 2160 / CIP 103997 / JCM 8858 / NBRC 14720 / NCIMB 2260 / Gabara) (Halobacterium pharaonis), this protein is Probable thymidylate kinase.